The chain runs to 180 residues: uncharacterized protein (180 aa).

This is an uncharacterized protein from Clostridium acetobutylicum (strain ATCC 824 / DSM 792 / JCM 1419 / IAM 19013 / LMG 5710 / NBRC 13948 / NRRL B-527 / VKM B-1787 / 2291 / W).